Consider the following 858-residue polypeptide: Elongation factor 2 (858 aa).

A tr-type G domain is found at 17–362; that stretch reads ANIRNMSVIA…MITIHLPSPV (346 aa). GTP is bound by residues 26-33, 158-161, and 216-218; these read AHVDHGKS, NKMD, and SGL. His-715 carries the post-translational modification Diphthamide.

This sequence belongs to the TRAFAC class translation factor GTPase superfamily. Classic translation factor GTPase family. EF-G/EF-2 subfamily. In terms of assembly, binds to 80S ribosomes. Actively translating ribosomes show mutually exclusive binding of eIF5a (EIF5A or EIF5A2) and EEF2/eEF2. Interacts with serbp1; interaction sequesters eef2/eEF2 at the A-site of the ribosome, thereby blocking the interaction sites of the mRNA-tRNA complex, promoting ribosome stabilization and hibernation. Interacts with habp4; interaction takes place at the A-site of hibernating ribosomes and promotes ribosome stabilization.

It is found in the cytoplasm. The protein localises to the nucleus. It carries out the reaction GTP + H2O = GDP + phosphate + H(+). Its function is as follows. Catalyzes the GTP-dependent ribosomal translocation step during translation elongation. During this step, the ribosome changes from the pre-translocational (PRE) to the post-translocational (POST) state as the newly formed A-site-bound peptidyl-tRNA and P-site-bound deacylated tRNA move to the P and E sites, respectively. Catalyzes the coordinated movement of the two tRNA molecules, the mRNA and conformational changes in the ribosome. The protein is Elongation factor 2 of Xenopus laevis (African clawed frog).